The sequence spans 210 residues: Transcription factor ALC (210 aa).

Residues 1-49 (MGDSDVGDRLPPPSSSDELSSFLRQILSRTPTAQPSSPPKSTNVSSAET) are disordered. The segment covering 27–48 (LSRTPTAQPSSPPKSTNVSSAE) has biased composition (polar residues). A bHLH domain is found at 93 to 142 (IDAQFHNLSEKKRRSKINEKMKALQKLIPNSNKTDKASMLDEAIEYLKQL).

As to quaternary structure, homodimer. As to expression, expressed constitutively in roots, leaves, stems, and flowers. Confined to the valve margins of the silique.

It is found in the nucleus. In terms of biological role, required for the dehiscence of fruit, especially for the separation of the valve cells from the replum. Promotes the differentiation of a strip of labile nonlignified cells sandwiched between layers of lignified cells. In Arabidopsis thaliana (Mouse-ear cress), this protein is Transcription factor ALC (ALC).